Here is a 71-residue protein sequence, read N- to C-terminus: UPF0435 protein RBAM_008100 (71 aa).

Belongs to the UPF0435 family.

The polypeptide is UPF0435 protein RBAM_008100 (Bacillus velezensis (strain DSM 23117 / BGSC 10A6 / LMG 26770 / FZB42) (Bacillus amyloliquefaciens subsp. plantarum)).